Reading from the N-terminus, the 708-residue chain is MSFCLTELYLWSLKNNLHIGDEDVGVHQYHEKKEAALHPDYGFLEEKQQWMESRGFPWILKNKRPEKLRDNLTELEELMQSSECVLSKWKNKYVCQLLFGSGVLVSISLSGPQLEKVVIDRSLVGKLISNPISDAIFTDSFIILSFLKENKLCLIQFTKKINSPDINRQLDKLSLLDLKISYTDIPGPKGRHLVRHLAINSMQDLALCWWPVPVDDVKPWSPVSSEKDRANLVLLSNSSCKLEVLSYIRTEGDLLNACFSINQPYQICTVEHSLNSNKEPMADRFIYECVRNKIQCVSVTRVPLRSRVISCAVNTSEDKLVLGCEDSSLILYESDCKVTLLAQADLLPDLIRWHPNGTIFVVASSQGELQIFDMALSPIRAQILAEEIEPNSTIQVCKQFNVSSTLVEMHWAAPHTLLQNMDMTDIYNLLYLRFDGGPIGVLQLKLGAICRGQLGAMEIISQYIRHDEVDEAVGLLSSMNWNTMGHQCFTSMTAIVNHLLRQRLTPDREAQLEASLGTFYSPTRPLLDTIVLQYRDPISRYARRFFHHLLRYQRFEKAFLLAVDIGARDLFMDIHYLALDKGELALAKVARKKAEEIDAESINSGVEPLLPTDTLADVNEAFVDLSLIPQVEDRILGSFPSTDLGAHNSIQRNANRQLVHIENEIGIEVYAESLDKSLPWNQECFEEDFAEENPEGIGSLKVVHFGLV.

WD repeat units lie at residues 303 to 342 and 343 to 382; these read PLRS…TLLA and QADL…IRAQ.

This sequence belongs to the WD repeat fritz family. In terms of assembly, interacts with sept2-a. Interacts with intu and fuz; fuz, intu and wdpcp probably form the core CPLANE (ciliogenesis and planar polarity effectors) complex.

The protein localises to the cell membrane. Its subcellular location is the cytoplasm. It localises to the cytoskeleton. It is found in the cilium axoneme. The protein resides in the cilium basal body. Functionally, probable effector of the planar cell polarity signaling pathway which regulates the septin cytoskeleton in both ciliogenesis and collective cell movements including covergent extension during gastrulation. Controls cell shape but not polarization during convergent extension. Proposed to function as core component of the CPLANE (ciliogenesis and planar polarity effectors) complex involved in the recruitment of peripheral IFT-A proteins to basal bodies. The chain is WD repeat-containing and planar cell polarity effector protein fritz homolog (wdpcp) from Xenopus laevis (African clawed frog).